The following is a 436-amino-acid chain: MVLPTVAIVGRPNVGKSTLFNRIAGERISIVEDIEGVTRDRIYATGEWLNRQFSLIDTGGIDDVDAPFMEQIKHQAQIAMEEADVIVFVVSGKEGVTDADEYVSKILYRTNTPVILAVNKVDNPEMRNDIYDFYSLGLGDPYPVSSVHGIGTGDVLDAIVENLPVEEAEENDDIIRFSLIGRPNVGKSSLINAILGEDRVIASPVAGTTRDAIDTHFTDADGQEFTMIDTAGMRKSGKIYENTEKYSVMRAMRAIDRSGVVLMVINAEEGIREYDKRIAGFAHEAGKGMIIVVNKWDTIDKDNHTVAKWEADIRDQFQFLTYAPIIFVSALTKQRLNKLPDLIKRISESQNKRIPSAVLNDVIMDAIAINPTPTDKGKRLKIFYATQVSVKPPTFVVFVNEEELMHFSYLRFLENQIRAAFTFEGTPIHLIARKRK.

2 consecutive EngA-type G domains span residues 4-167 (PTVA…PVEE) and 175-351 (IRFS…ESQN). Residues 10-17 (GRPNVGKS), 57-61 (DTGGI), 119-122 (NKVD), 181-188 (GRPNVGKS), 229-233 (DTAGM), and 294-297 (NKWD) each bind GTP. The KH-like domain maps to 352–436 (KRIPSAVLND…PIHLIARKRK (85 aa)).

It belongs to the TRAFAC class TrmE-Era-EngA-EngB-Septin-like GTPase superfamily. EngA (Der) GTPase family. As to quaternary structure, associates with the 50S ribosomal subunit.

Functionally, GTPase that plays an essential role in the late steps of ribosome biogenesis. In Streptococcus pyogenes serotype M5 (strain Manfredo), this protein is GTPase Der.